A 326-amino-acid polypeptide reads, in one-letter code: Pyruvate dehydrogenase E1 component subunit beta (326 aa).

Residue E60 participates in thiamine diphosphate binding. The K(+) site is built by I113, A161, I162, and N166.

As to quaternary structure, heterodimer of an alpha and a beta chain. It depends on thiamine diphosphate as a cofactor.

The protein resides in the plastid. The protein localises to the chloroplast. It catalyses the reaction N(6)-[(R)-lipoyl]-L-lysyl-[protein] + pyruvate + H(+) = N(6)-[(R)-S(8)-acetyldihydrolipoyl]-L-lysyl-[protein] + CO2. Its function is as follows. The pyruvate dehydrogenase complex catalyzes the overall conversion of pyruvate to acetyl-CoA and CO(2). It contains multiple copies of three enzymatic components: pyruvate dehydrogenase (E1), dihydrolipoamide acetyltransferase (E2) and lipoamide dehydrogenase (E3). The protein is Pyruvate dehydrogenase E1 component subunit beta (pdhB) of Chaetosphaeridium globosum (Charophycean green alga).